The chain runs to 192 residues: RNA-free ribonuclease P (192 aa).

Belongs to the HARP family.

It carries out the reaction Endonucleolytic cleavage of RNA, removing 5'-extranucleotides from tRNA precursor.. Functionally, RNA-free RNase P that catalyzes the removal of the 5'-leader sequence from pre-tRNA to produce the mature 5'-terminus. The protein is RNA-free ribonuclease P of Alkalilimnicola ehrlichii (strain ATCC BAA-1101 / DSM 17681 / MLHE-1).